The following is a 459-amino-acid chain: tRNA modification GTPase MnmE (459 aa).

(6S)-5-formyl-5,6,7,8-tetrahydrofolate is bound by residues R29, E91, and R130. The 157-residue stretch at 225–381 folds into the TrmE-type G domain; the sequence is GVKVAIVGRP…LEEALEQLVT (157 aa). Residue N235 coordinates K(+). Residues 235-240, 254-260, and 279-282 contribute to the GTP site; these read NVGKSS, TDLPGTT, and DTAG. S239 provides a ligand contact to Mg(2+). Residues T254, L256, and T259 each coordinate K(+). T260 is a binding site for Mg(2+). A (6S)-5-formyl-5,6,7,8-tetrahydrofolate-binding site is contributed by K459.

The protein belongs to the TRAFAC class TrmE-Era-EngA-EngB-Septin-like GTPase superfamily. TrmE GTPase family. Homodimer. Heterotetramer of two MnmE and two MnmG subunits. Requires K(+) as cofactor.

The protein localises to the cytoplasm. In terms of biological role, exhibits a very high intrinsic GTPase hydrolysis rate. Involved in the addition of a carboxymethylaminomethyl (cmnm) group at the wobble position (U34) of certain tRNAs, forming tRNA-cmnm(5)s(2)U34. The polypeptide is tRNA modification GTPase MnmE (Synechococcus sp. (strain JA-3-3Ab) (Cyanobacteria bacterium Yellowstone A-Prime)).